Reading from the N-terminus, the 215-residue chain is Protein NETWORKED 3B (215 aa).

The region spanning 5–90 is the NAB domain; sequence SKWWWIGANH…QKHDLLIKTS (86 aa). Residues 134–165 adopt a coiled-coil conformation; that stretch reads DETMKEELEILREENRVYKEKKEVVTRLLANL.

It belongs to the NET family. As to quaternary structure, interacts with F-actin.

In terms of biological role, plant-specific actin binding protein. May be part of a membrane-cytoskeletal adapter complex. The protein is Protein NETWORKED 3B of Arabidopsis thaliana (Mouse-ear cress).